We begin with the raw amino-acid sequence, 261 residues long: Proliferating cell nuclear antigen (261 aa).

N6-acetyllysine is present on residues K14, K77, and K80. A DNA-binding region spans residues 61–80 (RCDRNLAMGVNLTSMSKILK). C135 and C162 are joined by a disulfide. K164 is covalently cross-linked (Glycyl lysine isopeptide (Lys-Gly) (interchain with G-Cter in SUMO2); alternate). K164 participates in a covalent cross-link: Glycyl lysine isopeptide (Lys-Gly) (interchain with G-Cter in ubiquitin); alternate. Y211 bears the Phosphotyrosine; by EGFR mark. K248 bears the N6-acetyllysine mark. A Glycyl lysine isopeptide (Lys-Gly) (interchain with G-Cter in SUMO2) cross-link involves residue K254.

Belongs to the PCNA family. In terms of assembly, homotrimer. Interacts with p300/EP300; the interaction occurs on chromatin in UV-irradiated damaged cells. Interacts with CREBBP (via transactivation domain and C-terminus); the interaction occurs on chromatin in UV-irradiated damaged cells. Directly interacts with POLD1, POLD3 and POLD4 subunits of the DNA polymerase delta complex, POLD3 being the major interacting partner; the interaction with POLD3 is inhibited by CDKN1A/p21(CIP1). Forms a complex with activator 1 heteropentamer in the presence of ATP. Interacts with EXO1, POLH, POLK, DNMT1, ERCC5, FEN1, CDC6 and POLDIP2. Interacts with POLB. Interacts with APEX2; this interaction is triggered by reactive oxygen species and increased by misincorporation of uracil in nuclear DNA. Forms a ternary complex with DNTTIP2 and core histone. Interacts with KCTD10 and PPP1R15A. Interacts with SMARCA5/SNF2H. Interacts with BAZ1B/WSTF; the interaction is direct and is required for BAZ1B/WSTF binding to replication foci during S phase. Interacts with HLTF and SHPRH. Interacts with NUDT15; this interaction is disrupted in response to UV irradiation and acetylation. Interacts with CDKN1A/p21(CIP1) and CDT1; interacts via their PIP-box which also recruits the DCX(DTL) complex. The interaction with CDKN1A inhibits POLD3 binding. Interacts with DDX11. Interacts with EGFR; positively regulates PCNA. Interacts with PARPBP. Interacts (when ubiquitinated) with SPRTN; leading to enhance RAD18-mediated PCNA ubiquitination. Interacts (when polyubiquitinated) with ZRANB3. Interacts with SMARCAD1. Interacts with CDKN1C. Interacts with PCLAF (via PIP-box). Interacts with RTEL1 (via PIP-box); the interaction is direct and essential for the suppression of telomere fragility. Interacts with FAM111A (via PIP-box); the interaction is direct and required for PCNA loading on chromatin binding. Interacts with LIG1. Interacts with SETMAR. Interacts with ANKRD17. Interacts with FBXO18/FBH1 (via PIP-box); the interaction recruits the DCX(DTL) complex and promotes ubiquitination and degradation of FBXO18/FBH1. Interacts with POLN. Interacts with SDE2 (via PIP-box); the interaction is direct and prevents ultraviolet light induced monoubiquitination. Component of the replisome complex composed of at least DONSON, MCM2, MCM7, PCNA and TICRR; interaction at least with PCNA occurs during DNA replication. Interacts with MAPK15; the interaction is chromatin binding dependent and prevents MDM2-mediated PCNA destruction by inhibiting the association of PCNA with MDM2. Interacts with PARP10 (via PIP-box). Interacts with DDI2. Interacts with HMCES (via PIP-box). Interacts with TRAIP (via PIP-box). Interacts with UHRF2. Interacts with ALKBH2; this interaction is enhanced during the S-phase of the cell cycle. Interacts with ATAD5; the interaction promotes USP1-mediated PCNA deubiquitination. Interacts (when phosphorylated) with GRB2. Interacts with nuclear UNG; this interaction mediates UNG recruitment to S-phase replication foci. Interacts with ERCC6L2 (via an atypical PIP-box); this interaction facilitates cenrtomeric localization of ERCC6L2. In terms of processing, phosphorylated. Phosphorylation at Tyr-211 by EGFR stabilizes chromatin-associated PCNA. Post-translationally, acetylated by CREBBP and p300/EP300; preferentially acetylated by CREBBP on Lys-80, Lys-13 and Lys-14 and on Lys-77 by p300/EP300 upon loading on chromatin in response to UV irradiation. Lysine acetylation disrupts association with chromatin, hence promoting PCNA ubiquitination and proteasomal degradation in response to UV damage in a CREBBP- and EP300-dependent manner. Acetylation disrupts interaction with NUDT15 and promotes degradation. Ubiquitinated. Following DNA damage, can be either monoubiquitinated to stimulate direct bypass of DNA lesions by specialized DNA polymerases or polyubiquitinated to promote recombination-dependent DNA synthesis across DNA lesions by template switching mechanisms. Following induction of replication stress, monoubiquitinated by the UBE2B-RAD18 complex on Lys-164, leading to recruit translesion (TLS) polymerases, which are able to synthesize across DNA lesions in a potentially error-prone manner. An error-free pathway also exists and requires non-canonical polyubiquitination on Lys-164 through 'Lys-63' linkage of ubiquitin moieties by the E2 complex UBE2N-UBE2V2 and the E3 ligases, HLTF, RNF8 and SHPRH. This error-free pathway, also known as template switching, employs recombination mechanisms to synthesize across the lesion, using as a template the undamaged, newly synthesized strand of the sister chromatid. Monoubiquitination at Lys-164 also takes place in undamaged proliferating cells, and is mediated by the DCX(DTL) complex, leading to enhance PCNA-dependent translesion DNA synthesis. Sumoylated during S phase. In terms of processing, methylated on glutamate residues by ARMT1.

It is found in the nucleus. Auxiliary protein of DNA polymerase delta and epsilon, is involved in the control of eukaryotic DNA replication by increasing the polymerase's processibility during elongation of the leading strand. Induces a robust stimulatory effect on the 3'-5' exonuclease and 3'-phosphodiesterase, but not apurinic-apyrimidinic (AP) endonuclease, APEX2 activities. Has to be loaded onto DNA in order to be able to stimulate APEX2. Plays a key role in DNA damage response (DDR) by being conveniently positioned at the replication fork to coordinate DNA replication with DNA repair and DNA damage tolerance pathways. Acts as a loading platform to recruit DDR proteins that allow completion of DNA replication after DNA damage and promote postreplication repair: Monoubiquitinated PCNA leads to recruitment of translesion (TLS) polymerases, while 'Lys-63'-linked polyubiquitination of PCNA is involved in error-free pathway and employs recombination mechanisms to synthesize across the lesion. This chain is Proliferating cell nuclear antigen (PCNA), found in Bos taurus (Bovine).